The sequence spans 360 residues: Peptide chain release factor 1 (360 aa).

Residue Q235 is modified to N5-methylglutamine.

It belongs to the prokaryotic/mitochondrial release factor family. In terms of processing, methylated by PrmC. Methylation increases the termination efficiency of RF1.

It localises to the cytoplasm. Functionally, peptide chain release factor 1 directs the termination of translation in response to the peptide chain termination codons UAG and UAA. This chain is Peptide chain release factor 1, found in Blochmanniella pennsylvanica (strain BPEN).